The sequence spans 283 residues: Small ribosomal subunit protein uS2 (283 aa).

The disordered stretch occupies residues 229-283; sequence RSAGKSGEQPAEAEPMPDWERELLEGDGAKTEAKAEEPKAEAKKADEAPEAEKSN. The span at 246 to 283 shows a compositional bias: basic and acidic residues; the sequence is DWERELLEGDGAKTEAKAEEPKAEAKKADEAPEAEKSN.

The protein belongs to the universal ribosomal protein uS2 family.

The sequence is that of Small ribosomal subunit protein uS2 from Cutibacterium acnes (strain DSM 16379 / KPA171202) (Propionibacterium acnes).